Reading from the N-terminus, the 166-residue chain is Protein phosphatase 1 regulatory subunit 1A (166 aa).

N-acetylmethionine is present on Met-1. A disordered region spans residues 1-166 (MEQDNSPRKI…SQDSQGASAV (166 aa)). The segment at 9–12 (KIQF) is essential for activity. A compositionally biased stretch (basic and acidic residues) spans 19–29 (PHLDPEAAEQI). Thr-35 carries the phosphothreonine; by PKA modification. The tract at residues 42 to 54 (TSDQSSPEVDEDR) is essential for activity. 4 positions are modified to phosphoserine: Ser-43, Ser-46, Ser-47, and Ser-67. The segment covering 104 to 114 (AAEGTGAQESQ) has biased composition (low complexity). Residues 143–152 (AQERRGEEPS) show a composition bias toward basic and acidic residues. Residues 143–166 (AQERRGEEPSTAKTSQDSQGASAV) are interaction with PPP1R15A. Positions 153–166 (TAKTSQDSQGASAV) are enriched in polar residues.

It belongs to the protein phosphatase inhibitor 1 family. Interacts with PPP1R15A. Post-translationally, phosphorylation of Thr-35 is required for activity.

Its function is as follows. Inhibitor of protein-phosphatase 1. This protein may be important in hormonal control of glycogen metabolism. Hormones that elevate intracellular cAMP increase I-1 activity in many tissues. I-1 activation may impose cAMP control over proteins that are not directly phosphorylated by PKA. Following a rise in intracellular calcium, I-1 is inactivated by calcineurin (or PP2B). Does not inhibit type-2 phosphatases. This chain is Protein phosphatase 1 regulatory subunit 1A (PPP1R1A), found in Oryctolagus cuniculus (Rabbit).